Here is a 132-residue protein sequence, read N- to C-terminus: MAILISPSNNTGWGLGTHKLFGGAKQKSDQHPVYVQAHYRAPWGSKGRRRPGRARGVPLDPKTEAEVVATIDEVARNGPPAARLVLEAARRVGAYNLRRARKLTPAGRAMAAMRARQMVNQAKRRKRRVRSK.

A propeptide spanning residues 2 to 23 (AILISPSNNTGWGLGTHKLFGG) is cleaved from the precursor. A Nuclear localization signal motif is present at residues 124-132 (RRKRRVRSK).

This sequence belongs to the adenoviridae histone-like nucleoprotein family. As to quaternary structure, interacts with the core-capsid bridging protein; this interaction bridges the virus core to the capsid. Interacts with host NPM1; this interaction might play a role in placing the pre-histone-like nucleoprotein on the viral DNA or regulating viral gene expression. Interacts with host HMGB1; this interaction inhibits host immune response. Post-translationally, cleaved near the N-terminus by the viral protease during virion maturation to form the mature protein.

The protein localises to the virion. It localises to the host nucleus. The protein resides in the host nucleolus. Plays a role in the inhibition of host immune response within the nucleus. Interacts with cellular nucleosomes and immobilizes the host immune danger signal HMGB1 on chromatin. In turn, prevents HMGB1 release out of the cell and thus decreases inflammation. Also plays a role in the wrapping and condensation of the viral DNA. May also promote viral genome import into the nucleus. This Canine adenovirus serotype 1 (strain RI261) (CAdV-1) protein is Pre-histone-like nucleoprotein.